We begin with the raw amino-acid sequence, 321 residues long: Glucokinase (321 aa).

8–13 (GDVGGT) provides a ligand contact to ATP.

The protein belongs to the bacterial glucokinase family.

It is found in the cytoplasm. It carries out the reaction D-glucose + ATP = D-glucose 6-phosphate + ADP + H(+). The chain is Glucokinase from Salmonella typhi.